Consider the following 204-residue polypeptide: Large ribosomal subunit protein uL4 (204 aa).

Positions 47 to 69 are disordered; that stretch reads KAQKTRAEVSGGGKKPWRQKGTG.

It belongs to the universal ribosomal protein uL4 family. As to quaternary structure, part of the 50S ribosomal subunit.

One of the primary rRNA binding proteins, this protein initially binds near the 5'-end of the 23S rRNA. It is important during the early stages of 50S assembly. It makes multiple contacts with different domains of the 23S rRNA in the assembled 50S subunit and ribosome. Its function is as follows. Forms part of the polypeptide exit tunnel. In Cellvibrio japonicus (strain Ueda107) (Pseudomonas fluorescens subsp. cellulosa), this protein is Large ribosomal subunit protein uL4.